The sequence spans 340 residues: Ketol-acid reductoisomerase (NADP(+)) (340 aa).

One can recognise a KARI N-terminal Rossmann domain in the interval 3-182; that stretch reads VTMYYEDDVE…GCARVGIIET (180 aa). NADP(+) contacts are provided by residues 26–29, arginine 49, serine 53, and 83–86; these read YGSQ and DELQ. Histidine 108 is an active-site residue. Glycine 134 is a binding site for NADP(+). One can recognise a KARI C-terminal knotted domain in the interval 183–328; sequence TFKEETEEDL…AELRKAMPFT (146 aa). 4 residues coordinate Mg(2+): aspartate 191, glutamate 195, glutamate 227, and glutamate 231. Residue serine 252 coordinates substrate.

This sequence belongs to the ketol-acid reductoisomerase family. It depends on Mg(2+) as a cofactor.

It carries out the reaction (2R)-2,3-dihydroxy-3-methylbutanoate + NADP(+) = (2S)-2-acetolactate + NADPH + H(+). The enzyme catalyses (2R,3R)-2,3-dihydroxy-3-methylpentanoate + NADP(+) = (S)-2-ethyl-2-hydroxy-3-oxobutanoate + NADPH + H(+). The protein operates within amino-acid biosynthesis; L-isoleucine biosynthesis; L-isoleucine from 2-oxobutanoate: step 2/4. Its pathway is amino-acid biosynthesis; L-valine biosynthesis; L-valine from pyruvate: step 2/4. Functionally, involved in the biosynthesis of branched-chain amino acids (BCAA). Catalyzes an alkyl-migration followed by a ketol-acid reduction of (S)-2-acetolactate (S2AL) to yield (R)-2,3-dihydroxy-isovalerate. In the isomerase reaction, S2AL is rearranged via a Mg-dependent methyl migration to produce 3-hydroxy-3-methyl-2-ketobutyrate (HMKB). In the reductase reaction, this 2-ketoacid undergoes a metal-dependent reduction by NADPH to yield (R)-2,3-dihydroxy-isovalerate. The chain is Ketol-acid reductoisomerase (NADP(+)) from Lactococcus lactis subsp. lactis (strain IL1403) (Streptococcus lactis).